Consider the following 131-residue polypeptide: MKKTGVMNSNISRVIADMGHMDWLGVGDAGTPVPAETEKIDLSVRPGLPSFIDVLEEVLKELEVQKMYIAEEIKTENPKQLEAIKRTVPNVEIEFIPHSELKKDLKSSKAFIRTGEETPYSNVILESGVVF.

Catalysis depends on histidine 20, which acts as the Proton donor. Residues aspartate 28, histidine 98, and tyrosine 120–asparagine 122 each bind substrate.

It belongs to the RbsD / FucU family. RbsD subfamily. Homodecamer.

The protein localises to the cytoplasm. The catalysed reaction is beta-D-ribopyranose = beta-D-ribofuranose. It functions in the pathway carbohydrate metabolism; D-ribose degradation; D-ribose 5-phosphate from beta-D-ribopyranose: step 1/2. Catalyzes the interconversion of beta-pyran and beta-furan forms of D-ribose. The polypeptide is D-ribose pyranase (Lactobacillus johnsonii (strain CNCM I-12250 / La1 / NCC 533)).